We begin with the raw amino-acid sequence, 441 residues long: MERVLRQLSTGSYGGRRCGGIEERIERWSRTTNSGTNTAGGWIPPPASFLMSNTVLRVHGSDPGFFIHVKHVNTVTNRQHMVRTVRVMPHKTIQSNVVKRATAKFVTDKKRISNVFGVKSTRIEFTTREHRSANYTANCKPLVQPTYKSYFNLIMQSHGECTIGTHRDVINNLNYTTYLYGVCNPMSTMVDSMKQKNFLTPFFFSSINLAGPIETTNQLFISMTINTQKLTHETIYDLGKTLYPIYSLLEVDTKFNWFCNMIALFLECFINTPNKIGMIWMNERYYLENPTENATRSTETWNEYRKYMLEKCAPLLNGFSMAFAQRTGQFVYKNCEMVHIAPFFVAAALEEAVLSYGSFLLNTRKIKSFKELVMMLSVTPTDPRLTVTQTDDRTDVYRTGDRVLTWSHGADFKVGASERLVLGKKINQYIKCKTGDHGDQD.

This is an uncharacterized protein from Ictalurid herpesvirus 1 (strain Auburn) (IcHV-1).